The chain runs to 1097 residues: Cyclin-T (1097 aa).

3 disordered regions span residues 319-782, 804-936, and 985-1097; these read SNIT…SNGI, LLKP…SLQA, and AAPV…YNKK. Over residues 332-350 the composition is skewed to basic and acidic residues; the sequence is DSRDRDRDRERERERERDP. Composition is skewed to low complexity over residues 373-390, 420-456, 467-478, and 489-511; these read SSSVSGVPGSSSSSSSSS, PSSHQRSSSSGLGSSGSGSQRSSSSSSSSSQQPGRPS, GMPPVGVGMPPH, and PQQPQQQPVPHPSASNSSASGMS. The span at 580–591 shows a compositional bias: polar residues; the sequence is LPYSQSQSYGHM. Residues 592–606 show a composition bias toward low complexity; it reads QQQPVPQSQQQQMPP. The segment covering 609 to 620 has biased composition (polar residues); sequence SQHSLQSKNSLF. A compositionally biased stretch (basic and acidic residues) spans 652 to 675; that stretch reads HDYKLNSHPRDKESPKKERLTPTK. Low complexity predominate over residues 687–698; the sequence is GSGNSSSGSGSS. Over residues 860-870 the composition is skewed to basic and acidic residues; the sequence is GEIKEESSSKS. Residues 871–883 are compositionally biased toward basic residues; sequence EKKKKKDKHKHKE. Residues 884–895 are compositionally biased toward basic and acidic residues; the sequence is KDKSKDKTEKEE. Serine 916 is modified (phosphoserine). Over residues 993–1007 the composition is skewed to gly residues; the sequence is GAGGGGYSSSGGSSS. Over residues 1016 to 1031 the composition is skewed to basic and acidic residues; the sequence is SDRDRDKESKKNKSQD. Over residues 1037–1050 the composition is skewed to gly residues; sequence GAGGGIFNPLGGAG. Pro residues predominate over residues 1087–1097; it reads APPPMPVYNKK.

The protein belongs to the cyclin family. Cyclin C subfamily. In terms of assembly, component of the super elongation complex (SEC), at least composed of Ell, Cdk9, cyclin-T (CycT), lilli and ear. Associates with CDK9 to form P-TEFb.

It is found in the nucleus. Functionally, regulatory subunit of the cyclin-dependent kinase pair (CDK9/cyclin T) complex, also called positive transcription elongation factor B (P-TEFb), which is proposed to facilitate the transition from abortive to production elongation by phosphorylating the CTD (carboxy-terminal domain) of the large subunit of RNA polymerase II (RNAP II). The sequence is that of Cyclin-T (CycT) from Drosophila melanogaster (Fruit fly).